The following is a 221-amino-acid chain: Endonuclease V (221 aa).

The Mg(2+) site is built by Asp-44 and Asp-112.

The protein belongs to the endonuclease V family. Requires Mg(2+) as cofactor.

The protein localises to the cytoplasm. The enzyme catalyses Endonucleolytic cleavage at apurinic or apyrimidinic sites to products with a 5'-phosphate.. DNA repair enzyme involved in the repair of deaminated bases. Selectively cleaves double-stranded DNA at the second phosphodiester bond 3' to a deoxyinosine leaving behind the intact lesion on the nicked DNA. This chain is Endonuclease V, found in Nostoc sp. (strain PCC 7120 / SAG 25.82 / UTEX 2576).